A 542-amino-acid polypeptide reads, in one-letter code: Membrane protein insertase YidC (542 aa).

6 helical membrane-spanning segments follow: residues 6-26 (NILL…WQTD), 326-346 (LVVD…LLMF), 350-370 (FVGN…GMLY), 421-441 (GGCL…WVLL), 458-478 (LSVQ…MFLM), and 501-521 (VIFT…WLVG).

It belongs to the OXA1/ALB3/YidC family. Type 1 subfamily. As to quaternary structure, interacts with the Sec translocase complex via SecD. Specifically interacts with transmembrane segments of nascent integral membrane proteins during membrane integration.

The protein resides in the cell inner membrane. Its function is as follows. Required for the insertion and/or proper folding and/or complex formation of integral membrane proteins into the membrane. Involved in integration of membrane proteins that insert both dependently and independently of the Sec translocase complex, as well as at least some lipoproteins. Aids folding of multispanning membrane proteins. The polypeptide is Membrane protein insertase YidC (Shewanella loihica (strain ATCC BAA-1088 / PV-4)).